Reading from the N-terminus, the 457-residue chain is Glutamate--tRNA ligase 1 (457 aa).

The 'HIGH' region motif lies at 9 to 19 (PSPTGYIHIGN). The short motif at 250–254 (GLSKR) is the 'KMSKS' region element. K253 is an ATP binding site.

Belongs to the class-I aminoacyl-tRNA synthetase family. Glutamate--tRNA ligase type 1 subfamily. Monomer.

It is found in the cytoplasm. The enzyme catalyses tRNA(Glu) + L-glutamate + ATP = L-glutamyl-tRNA(Glu) + AMP + diphosphate. Catalyzes the attachment of glutamate to tRNA(Glu) in a two-step reaction: glutamate is first activated by ATP to form Glu-AMP and then transferred to the acceptor end of tRNA(Glu). The polypeptide is Glutamate--tRNA ligase 1 (Brucella abortus (strain S19)).